A 126-amino-acid chain; its full sequence is Holo-[acyl-carrier-protein] synthase (126 aa).

Mg(2+) is bound by residues D9 and E58.

It belongs to the P-Pant transferase superfamily. AcpS family. It depends on Mg(2+) as a cofactor.

Its subcellular location is the cytoplasm. The enzyme catalyses apo-[ACP] + CoA = holo-[ACP] + adenosine 3',5'-bisphosphate + H(+). In terms of biological role, transfers the 4'-phosphopantetheine moiety from coenzyme A to a Ser of acyl-carrier-protein. The chain is Holo-[acyl-carrier-protein] synthase from Shewanella denitrificans (strain OS217 / ATCC BAA-1090 / DSM 15013).